We begin with the raw amino-acid sequence, 76 residues long: Large ribosomal subunit protein eL20 (76 aa).

This sequence belongs to the eukaryotic ribosomal protein eL20 family. Part of the 50S ribosomal subunit. Binds 23S rRNA.

The chain is Large ribosomal subunit protein eL20 from Methanococcus maripaludis (strain C7 / ATCC BAA-1331).